A 77-amino-acid polypeptide reads, in one-letter code: Protein RALF-like 17 (77 aa).

An N-terminal signal peptide occupies residues Met1–Ala29. Cys37 and Cys51 are joined by a disulfide.

This sequence belongs to the plant rapid alkalinization factor (RALF) family.

It localises to the secreted. In terms of biological role, cell signaling peptide that may regulate plant stress, growth, and development. Mediates a rapid alkalinization of extracellular space by mediating a transient increase in the cytoplasmic Ca(2+) concentration leading to a calcium-dependent signaling events through a cell surface receptor and a concomitant activation of some intracellular mitogen-activated protein kinases. This Arabidopsis thaliana (Mouse-ear cress) protein is Protein RALF-like 17 (RALFL17).